A 386-amino-acid chain; its full sequence is MNSLQVLTKKVLIETKAFSNYHEDDIFILQQLGLWWHNGPIGFCKQCKMVTSGSMSCSDDDSYELDRALVKAVKENQTDLIKLFVLWGAEINFGIMCAKTKQTKDLCIQLGADPQFLDVGLYNMFVYLVKRKKVLLAIEIYYDNILILDSFDSYDFHLLIDFVYNRFILYLDEKDEEMTRNALVLKFWYKFAIDFKLVKPIRYLSKKFPHLDIWRLKAAIYLGNIDEVHRAYFQENIRLDPNDMMLLACMYPQNKLGIYYCFALGADIDNALDILLRFDETNKQIHRETRGEIIFNIERGYLINIYFCISLGANPYIKKIQDTIKQKHSNIMILLFSKKKLLSPHSVLQNKILDPSDVYKMISTYENTESFYPFSSLAVKLIQQAK.

This sequence belongs to the asfivirus MGF 360 family.

In terms of biological role, plays a role in virus cell tropism, and may be required for efficient virus replication in macrophages. The protein is Protein MGF 360-4L of African swine fever virus (isolate Warthog/Namibia/Wart80/1980) (ASFV).